Reading from the N-terminus, the 166-residue chain is Chemoreceptor glutamine deamidase CheD (166 aa).

This sequence belongs to the CheD family. Forms a complex with CheC.

It carries out the reaction L-glutaminyl-[protein] + H2O = L-glutamyl-[protein] + NH4(+). In terms of biological role, deamidates glutamine residues to glutamate on methyl-accepting chemotaxis receptors (MCPs). CheD-mediated MCP deamidation is required for productive communication of the conformational signals of the chemoreceptors to the CheA kinase. The chain is Chemoreceptor glutamine deamidase CheD from Bacillus velezensis (strain DSM 23117 / BGSC 10A6 / LMG 26770 / FZB42) (Bacillus amyloliquefaciens subsp. plantarum).